The sequence spans 104 residues: Sweet protein mabinlin-3 (104 aa).

Intrachain disulfides connect Cys-4-Cys-53, Cys-17-Cys-42, Cys-43-Cys-91, and Cys-55-Cys-99.

The protein belongs to the 2S seed storage albumins family. As to quaternary structure, heterodimer of a small A and a large B chain linked by disulfide bonds.

In terms of biological role, heat stable 2S seed storage protein having sweetness-inducing activity. The chain is Sweet protein mabinlin-3 from Capparis masaikai (Mabinlang).